The following is a 360-amino-acid chain: Mitogen-activated protein kinase 1 (360 aa).

At Ala2 the chain carries N-acetylalanine. Positions 25 to 313 (YTNLSYIGEG…VEQALAHPYL (289 aa)) constitute a Protein kinase domain. The residue at position 29 (Ser29) is a Phosphoserine; by SGK1. ATP is bound by residues 31 to 39 (IGEGAYGMV) and Lys54. Asp149 acts as the Proton acceptor in catalysis. Phosphothreonine; by MAP2K1 and MAP2K2 is present on Thr185. The TXY signature appears at 185–187 (TEY). Tyr187 is modified (phosphotyrosine; by MAP2K1 and MAP2K2). Thr190 carries the post-translational modification Phosphothreonine; by autocatalysis. Phosphoserine is present on residues Ser246, Ser248, and Ser284.

The protein belongs to the protein kinase superfamily. CMGC Ser/Thr protein kinase family. MAP kinase subfamily. As to quaternary structure, binds both upstream activators and downstream substrates in multimolecular complexes. Interacts with ADAM15, ARHGEF2, ARRB2, DAPK1 (via death domain), HSF4, IER3, IPO7, MKNK2, MORG1, NISCH, PEA15, SGK1, and isoform 1 of NEK2. Interacts (via phosphorylated form) with TPR (via C-terminal region and phosphorylated form); the interaction requires dimerization of MAPK1/ERK2 and increases following EGF stimulation. Interacts with MAP2K1. Interacts with DUSP6. Interacts (phosphorylated form) with CAV2 ('Tyr-19'-phosphorylated form); the interaction, promoted by insulin, leads to nuclear location and MAPK1 activation. MKNK2 isoform 1 binding prevents from dephosphorylation and inactivation. Interacts with DCC. The phosphorylated form interacts with PML. Interacts with STYX. Interacts with CDK2AP2. Interacts with CAVIN4. Interacts with DUSP7; the interaction enhances DUSP7 phosphatase activity. Interacts with GIT1; this interaction is necessary for MAPK1 localization to focal adhesions. Interacts with ZNF263. Interacts with phosphoglycerate kinase PGK1; the interaction is direct, occurs under hypoxic conditions, and promotes interaction between PGK1 and PIN1. Mg(2+) is required as a cofactor. Post-translationally, dually phosphorylated on Thr-185 and Tyr-187, which activates the enzyme. Phosphorylated upon FLT3 and KIT signaling. Phosphorylation on Ser-29 by SGK1 results in its activation by enhancing its interaction with MAP2K1/MEK1 and MAP2K2/MEK2. Phosphorylation at Ser-246 and Ser-248 as well as autophosphorylation at Thr-190 promote nuclear localization. Ligand-activated ALK induces tyrosine phosphorylation. Dephosphorylated by PTPRJ at Tyr-187. Dephosphorylated by DUSP1 and DUSP2 at Thr-185 and Tyr-187. In terms of processing, ISGylated. Ubiquitinated by TRIM15 via 'Lys-63'-linked ubiquitination; leading to activation. Deubiquitinated by CYLD.

Its subcellular location is the nucleus. It localises to the cytoplasm. It is found in the cytoskeleton. The protein localises to the microtubule organizing center. The protein resides in the centrosome. Its subcellular location is the spindle. It localises to the membrane. It is found in the caveola. The protein localises to the cell junction. The protein resides in the focal adhesion. The catalysed reaction is L-seryl-[protein] + ATP = O-phospho-L-seryl-[protein] + ADP + H(+). It carries out the reaction L-threonyl-[protein] + ATP = O-phospho-L-threonyl-[protein] + ADP + H(+). Its activity is regulated as follows. Phosphorylated by MAP2K1/MEK1 and MAP2K2/MEK2 on Thr-185 and Tyr-187 in response to external stimuli like insulin or NGF. Both phosphorylations are required for activity. This phosphorylation causes dramatic conformational changes, which enable full activation and interaction of MAPK1/ERK2 with its substrates. Phosphorylation on Ser-29 by SGK1 results in its activation by enhancing its interaction with MAP2K1/MEK1 and MAP2K2/MEK2. Dephosphorylated and inactivated by DUSP1, DUSP3, DUSP6 and DUSP9. Inactivated by pyrimidylpyrrole inhibitors. Serine/threonine kinase which acts as an essential component of the MAP kinase signal transduction pathway. MAPK1/ERK2 and MAPK3/ERK1 are the 2 MAPKs which play an important role in the MAPK/ERK cascade. They participate also in a signaling cascade initiated by activated KIT and KITLG/SCF. Depending on the cellular context, the MAPK/ERK cascade mediates diverse biological functions such as cell growth, adhesion, survival and differentiation through the regulation of transcription, translation, cytoskeletal rearrangements. The MAPK/ERK cascade also plays a role in initiation and regulation of meiosis, mitosis, and postmitotic functions in differentiated cells by phosphorylating a number of transcription factors. About 160 substrates have already been discovered for ERKs. Many of these substrates are localized in the nucleus, and seem to participate in the regulation of transcription upon stimulation. However, other substrates are found in the cytosol as well as in other cellular organelles, and those are responsible for processes such as translation, mitosis and apoptosis. Moreover, the MAPK/ERK cascade is also involved in the regulation of the endosomal dynamics, including lysosome processing and endosome cycling through the perinuclear recycling compartment (PNRC); as well as in the fragmentation of the Golgi apparatus during mitosis. The substrates include transcription factors (such as ATF2, BCL6, ELK1, ERF, FOS, HSF4 or SPZ1), cytoskeletal elements (such as CANX, CTTN, GJA1, MAP2, MAPT, PXN, SORBS3 or STMN1), regulators of apoptosis (such as BAD, BTG2, CASP9, DAPK1, IER3, MCL1 or PPARG), regulators of translation (such as EIF4EBP1 and FXR1) and a variety of other signaling-related molecules (like ARHGEF2, DCC, FRS2 or GRB10). Protein kinases (such as RAF1, RPS6KA1/RSK1, RPS6KA3/RSK2, RPS6KA2/RSK3, RPS6KA6/RSK4, SYK, MKNK1/MNK1, MKNK2/MNK2, RPS6KA5/MSK1, RPS6KA4/MSK2, MAPKAPK3 or MAPKAPK5) and phosphatases (such as DUSP1, DUSP4, DUSP6 or DUSP16) are other substrates which enable the propagation the MAPK/ERK signal to additional cytosolic and nuclear targets, thereby extending the specificity of the cascade. Mediates phosphorylation of TPR in response to EGF stimulation. May play a role in the spindle assembly checkpoint. Phosphorylates PML and promotes its interaction with PIN1, leading to PML degradation. Phosphorylates CDK2AP2. Phosphorylates phosphoglycerate kinase PGK1 under hypoxic conditions to promote its targeting to the mitochondrion and suppress the formation of acetyl-coenzyme A from pyruvate. In terms of biological role, acts as a transcriptional repressor. Binds to a [GC]AAA[GC] consensus sequence. Repress the expression of interferon gamma-induced genes. Seems to bind to the promoter of CCL5, DMP1, IFIH1, IFITM1, IRF7, IRF9, LAMP3, OAS1, OAS2, OAS3 and STAT1. Transcriptional activity is independent of kinase activity. This is Mitogen-activated protein kinase 1 from Bos taurus (Bovine).